We begin with the raw amino-acid sequence, 418 residues long: MSGTFNDIRRRKKEEGSPTAGITERHENKSLSSIDKREQTLKPQLESCCPLATPFERRLQTLAVAWHTSSFVLFSIFTLFAISTPALWVLAIPYMIYFFFDRSPATGEVVNRYSLRFRSLPIWKWYCDYFPISLIKTVNLKPTFTLSKNKRVNEKNYKIRLWPTKYSINLKSNSTIDYRNQECTGPTYLFGYHPHGIGALGAFGAFATEGCNYSKIFPGIPISLMTLVTQFHIPLYRDYLLALGISSVSRKNALRTLSKNQSICIVVGGARESLLSSTNGTQLILNKRKGFIKLAIQTGNINLVPVFAFGEVDCYNVLSTKKDSVLGKMQLWFKENFGFTIPIFYARGLFNYDFGLLPFRAPINVVVGRPIYVEKKITNPPDDVVNHFHDLYIAELKRLYYENREKYGVPDAELKIVG.

The disordered stretch occupies residues 1-30; that stretch reads MSGTFNDIRRRKKEEGSPTAGITERHENKS. The Cytoplasmic segment spans residues 1–71; sequence MSGTFNDIRR…LAVAWHTSSF (71 aa). Ser17 carries the phosphoserine modification. Residues 72 to 92 traverse the membrane as a helical segment; sequence VLFSIFTLFAISTPALWVLAI. At 93–186 the chain is on the lumenal side; it reads PYMIYFFFDR…DYRNQECTGP (94 aa). A glycan (N-linked (GlcNAc...) asparagine) is linked at Asn173. A helical transmembrane segment spans residues 187 to 207; sequence TYLFGYHPHGIGALGAFGAFA. Over 208-215 the chain is Cytoplasmic; sequence TEGCNYSK. Residues 216–236 form a helical membrane-spanning segment; it reads IFPGIPISLMTLVTQFHIPLY. At 237–289 the chain is on the lumenal side; it reads RDYLLALGISSVSRKNALRTLSKNQSICIVVGGARESLLSSTNGTQLILNKRK. Residues Asn260 and Asn279 are each glycosylated (N-linked (GlcNAc...) asparagine). Residues 290 to 310 traverse the membrane as a helical segment; that stretch reads GFIKLAIQTGNINLVPVFAFG. The Cytoplasmic portion of the chain corresponds to 311-418; sequence EVDCYNVLST…VPDAELKIVG (108 aa).

Belongs to the diacylglycerol acyltransferase family.

The protein localises to the lipid droplet. It localises to the endoplasmic reticulum membrane. It carries out the reaction an acyl-CoA + a 1,2-diacyl-sn-glycerol = a triacyl-sn-glycerol + CoA. The enzyme catalyses a 2-acylglycerol + an acyl-CoA = a 1,2-diacylglycerol + CoA. The catalysed reaction is 2-(9Z-octadecenoyl)-glycerol + (9Z)-octadecenoyl-CoA = 1,2-di-(9Z-octadecenoyl)-glycerol + CoA. It functions in the pathway glycerolipid metabolism; triacylglycerol biosynthesis. Functionally, catalyzes the terminal and only committed step in triacylglycerol (TAG) synthesis by using diacylglycerol (DAG) and fatty acyl-CoA as substrates. Required for storage lipid synthesis. Major DAG esterifying enzyme in stationary phase when TAG production is particularly active. Involved in lipid particle synthesis from the endoplasmic reticulum, promoting localized TAG production at discrete ER subdomains, and in ergosterol biosynthesis. Also has monoacylglycerol acyltransferase (MGAT) activity, catalyzing the acyl-CoA-dependent esterification of monoacylglycerol to diacylglycerol. Can also utilize ceramide instead of DAG, acylating the ceramides by attaching a fatty acid to the hydroxy group on the first carbon atom of the long-chain base to produce 1-O-acylceramides. The sequence is that of Diacylglycerol O-acyltransferase 1 (DGA1) from Saccharomyces cerevisiae (strain ATCC 204508 / S288c) (Baker's yeast).